The primary structure comprises 540 residues: Hydroxylamine reductase (540 aa).

Cys-3, Cys-6, Cys-15, and Cys-21 together coordinate [4Fe-4S] cluster. His-236, Glu-260, Cys-304, Cys-395, Cys-423, Cys-448, Glu-483, and Lys-485 together coordinate hybrid [4Fe-2O-2S] cluster. Cys-395 carries the cysteine persulfide modification.

It belongs to the HCP family. The cofactor is [4Fe-4S] cluster. Requires hybrid [4Fe-2O-2S] cluster as cofactor.

Its subcellular location is the cytoplasm. The enzyme catalyses A + NH4(+) + H2O = hydroxylamine + AH2 + H(+). Functionally, catalyzes the reduction of hydroxylamine to form NH(3) and H(2)O. In Methanosarcina mazei (strain ATCC BAA-159 / DSM 3647 / Goe1 / Go1 / JCM 11833 / OCM 88) (Methanosarcina frisia), this protein is Hydroxylamine reductase.